The primary structure comprises 358 residues: DNA replication and repair protein RecF (358 aa).

An ATP-binding site is contributed by 30–37 (GNNGSGKT).

The protein belongs to the RecF family.

It localises to the cytoplasm. The RecF protein is involved in DNA metabolism; it is required for DNA replication and normal SOS inducibility. RecF binds preferentially to single-stranded, linear DNA. It also seems to bind ATP. The polypeptide is DNA replication and repair protein RecF (Histophilus somni (strain 2336) (Haemophilus somnus)).